The following is a 354-amino-acid chain: Macrosialin (354 aa).

The signal sequence occupies residues 1-21; sequence MRLAVLFSGALLGLLAAQGTG. Topologically, residues 22–319 are extracellular; sequence NDCPHKKSAT…QSFSCPSDRS (298 aa). The tract at residues 23–140 is mucin-like; the sequence is DCPHKKSATL…SPGFTSSAHP (118 aa). A compositionally biased stretch (low complexity) spans 40–51; it reads PTVTESTGTTSH. Positions 40–162 are disordered; the sequence is PTVTESTGTT…SKETIGDYTW (123 aa). Residues 52-61 are compositionally biased toward basic residues; that stretch reads RTTKSHKTTT. Residues 62–84 show a composition bias toward low complexity; that stretch reads HRTTTTGTTSHGPTTATHNPTTT. A run of 2 repeats spans residues 70 to 99 and 100 to 129. The interval 70–129 is 2 X 30 AA tandem repeats; the sequence is TSHGPTTATHNPTTTSHGNVTVHPTSNSTATSQGPSTATHSPATTSHGNATVHPTSNSTA. A compositionally biased stretch (polar residues) spans 85 to 102; the sequence is SHGNVTVHPTSNSTATSQ. N-linked (GlcNAc...) asparagine glycans are attached at residues Asn88 and Asn96. Residues 103–117 show a composition bias toward low complexity; it reads GPSTATHSPATTSHG. N-linked (GlcNAc...) asparagine glycosylation is found at Asn118 and Asn126. The segment covering 121–135 has biased composition (polar residues); it reads VHPTSNSTATSPGFT. The segment covering 140–150 has biased composition (pro residues); that stretch reads PEPPPPSPSPS. N-linked (GlcNAc...) asparagine glycosylation is found at Asn164, Asn199, Asn246, Asn261, and Asn279. Cys169 and Cys207 are disulfide-bonded. Residues Cys277 and Cys314 are joined by a disulfide bond. The helical transmembrane segment at 320-344 threads the bilayer; sequence ILLPLIIGLILLGLLALVLIAFCII. Residues 345-354 are Cytoplasmic-facing; sequence RRRPSAYQAL.

The protein belongs to the LAMP family. N- and O-glycosylated. Highly expressed by blood monocytes and tissue macrophages. Also expressed in lymphocytes, fibroblasts and endothelial cells. Expressed in many tumor cell lines which could allow them to attach to selectins on vascular endothelium, facilitating their dissemination to secondary sites.

It is found in the cell membrane. The protein resides in the endosome membrane. The protein localises to the lysosome membrane. Functionally, could play a role in phagocytic activities of tissue macrophages, both in intracellular lysosomal metabolism and extracellular cell-cell and cell-pathogen interactions. Binds to tissue- and organ-specific lectins or selectins, allowing homing of macrophage subsets to particular sites. Rapid recirculation of CD68 from endosomes and lysosomes to the plasma membrane may allow macrophages to crawl over selectin-bearing substrates or other cells. This is Macrosialin (CD68) from Homo sapiens (Human).